Reading from the N-terminus, the 104-residue chain is Large ribosomal subunit protein uL24 (104 aa).

The interval 82–104 is disordered; that stretch reads RVGYRFDENGKKVRVSRRNGKDI. The span at 93 to 104 shows a compositional bias: basic residues; that stretch reads KVRVSRRNGKDI.

This sequence belongs to the universal ribosomal protein uL24 family. Part of the 50S ribosomal subunit.

Its function is as follows. One of two assembly initiator proteins, it binds directly to the 5'-end of the 23S rRNA, where it nucleates assembly of the 50S subunit. In terms of biological role, one of the proteins that surrounds the polypeptide exit tunnel on the outside of the subunit. In Corynebacterium glutamicum (strain R), this protein is Large ribosomal subunit protein uL24.